A 276-amino-acid polypeptide reads, in one-letter code: Putative translation initiation factor eIF-2B subunit 2-like (276 aa).

The protein belongs to the eIF-2B alpha/beta/delta subunits family. In terms of assembly, complex of two different subunits.

Functionally, catalyzes the exchange of initiation factor 2-bound GDP for GTP. The sequence is that of Putative translation initiation factor eIF-2B subunit 2-like from Pyrococcus abyssi (strain GE5 / Orsay).